Here is a 127-residue protein sequence, read N- to C-terminus: Large ribosomal subunit protein bL12 (127 aa).

The protein belongs to the bacterial ribosomal protein bL12 family. In terms of assembly, homodimer. Part of the ribosomal stalk of the 50S ribosomal subunit. Forms a multimeric L10(L12)X complex, where L10 forms an elongated spine to which 2 to 4 L12 dimers bind in a sequential fashion. Binds GTP-bound translation factors.

Forms part of the ribosomal stalk which helps the ribosome interact with GTP-bound translation factors. Is thus essential for accurate translation. This chain is Large ribosomal subunit protein bL12, found in Streptomyces avermitilis (strain ATCC 31267 / DSM 46492 / JCM 5070 / NBRC 14893 / NCIMB 12804 / NRRL 8165 / MA-4680).